A 289-amino-acid polypeptide reads, in one-letter code: Pantothenate synthetase (289 aa).

30-37 contacts ATP; that stretch reads MGYLHKGH. The Proton donor role is filled by His-37. Residue Gln-61 participates in (R)-pantoate binding. Gln-61 contacts beta-alanine. 147–150 contacts ATP; sequence GEKD. A (R)-pantoate-binding site is contributed by Gln-153. ATP contacts are provided by residues Val-176 and 184-187; that span reads CSSR.

It belongs to the pantothenate synthetase family. As to quaternary structure, homodimer.

The protein localises to the cytoplasm. It catalyses the reaction (R)-pantoate + beta-alanine + ATP = (R)-pantothenate + AMP + diphosphate + H(+). It participates in cofactor biosynthesis; (R)-pantothenate biosynthesis; (R)-pantothenate from (R)-pantoate and beta-alanine: step 1/1. In terms of biological role, catalyzes the condensation of pantoate with beta-alanine in an ATP-dependent reaction via a pantoyl-adenylate intermediate. The protein is Pantothenate synthetase of Brucella anthropi (strain ATCC 49188 / DSM 6882 / CCUG 24695 / JCM 21032 / LMG 3331 / NBRC 15819 / NCTC 12168 / Alc 37) (Ochrobactrum anthropi).